Consider the following 92-residue polypeptide: Small ribosomal subunit protein uS19 (92 aa).

It belongs to the universal ribosomal protein uS19 family.

Its function is as follows. Protein S19 forms a complex with S13 that binds strongly to the 16S ribosomal RNA. This chain is Small ribosomal subunit protein uS19, found in Macrococcus caseolyticus (strain JCSC5402) (Macrococcoides caseolyticum).